A 137-amino-acid chain; its full sequence is Endoribonuclease YbeY (137 aa).

Residues histidine 105, histidine 109, and aspartate 115 each coordinate Zn(2+).

This sequence belongs to the endoribonuclease YbeY family. It depends on Zn(2+) as a cofactor.

It is found in the cytoplasm. Single strand-specific metallo-endoribonuclease involved in late-stage 70S ribosome quality control and in maturation of the 3' terminus of the 16S rRNA. This is Endoribonuclease YbeY from Chlorobium luteolum (strain DSM 273 / BCRC 81028 / 2530) (Pelodictyon luteolum).